A 220-amino-acid polypeptide reads, in one-letter code: Ribosome maturation factor RimM (220 aa).

One can recognise a PRC barrel domain in the interval 143 to 220 (EGEFYWVDLI…RIVVDWGLDY (78 aa)).

Belongs to the RimM family. In terms of assembly, binds ribosomal protein uS19.

Its subcellular location is the cytoplasm. Functionally, an accessory protein needed during the final step in the assembly of 30S ribosomal subunit, possibly for assembly of the head region. Essential for efficient processing of 16S rRNA. May be needed both before and after RbfA during the maturation of 16S rRNA. It has affinity for free ribosomal 30S subunits but not for 70S ribosomes. The protein is Ribosome maturation factor RimM of Cupriavidus metallidurans (strain ATCC 43123 / DSM 2839 / NBRC 102507 / CH34) (Ralstonia metallidurans).